Reading from the N-terminus, the 168-residue chain is Large ribosomal subunit protein uL10 (168 aa).

It belongs to the universal ribosomal protein uL10 family. In terms of assembly, part of the ribosomal stalk of the 50S ribosomal subunit. The N-terminus interacts with L11 and the large rRNA to form the base of the stalk. The C-terminus forms an elongated spine to which L12 dimers bind in a sequential fashion forming a multimeric L10(L12)X complex.

Functionally, forms part of the ribosomal stalk, playing a central role in the interaction of the ribosome with GTP-bound translation factors. In Buchnera aphidicola subsp. Baizongia pistaciae (strain Bp), this protein is Large ribosomal subunit protein uL10 (rplJ).